Reading from the N-terminus, the 301-residue chain is MSIDKSYCGFIAIVGRPNVGKSTLLNKLLGQKISITSRKAQTTRHRIVGIHTEGAYQAIYVDTPGLHMEEKRAINRLMNKAASSSIGDVELVIFVVEGTRWTPDDEMVLNKLREGKAPVILAVNKVDNVQEKADLLPHLQFLASQMNFLDIVPISAETGLNVDTIAAIVRKHLPEATHHFPEDYITDRSQRFMASEIIREKLMRFLGAELPYSVTVEIERFVSNERGGYDINGLILVEREGQKKMVIGNKGAKIKTIGIEARKDMQEMFEAPVHLELWVKVKSGWADDERALRSLGYVDDL.

The Era-type G domain occupies 7–175; sequence YCGFIAIVGR…AAIVRKHLPE (169 aa). The G1 stretch occupies residues 15–22; sequence GRPNVGKS. 15–22 contacts GTP; that stretch reads GRPNVGKS. Residues 41–45 form a G2 region; the sequence is QTTRH. Positions 62-65 are G3; that stretch reads DTPG. Residues 62–66 and 124–127 contribute to the GTP site; these read DTPGL and NKVD. Residues 124–127 form a G4 region; the sequence is NKVD. The interval 154–156 is G5; that stretch reads ISA. Positions 206–283 constitute a KH type-2 domain; it reads LGAELPYSVT…HLELWVKVKS (78 aa).

It belongs to the TRAFAC class TrmE-Era-EngA-EngB-Septin-like GTPase superfamily. Era GTPase family. Monomer.

The protein resides in the cytoplasm. Its subcellular location is the cell inner membrane. Its function is as follows. An essential GTPase that binds both GDP and GTP, with rapid nucleotide exchange. Plays a role in 16S rRNA processing and 30S ribosomal subunit biogenesis and possibly also in cell cycle regulation and energy metabolism. In Escherichia coli (strain K12 / DH10B), this protein is GTPase Era.